The sequence spans 374 residues: N5-carboxyaminoimidazole ribonucleotide synthase (374 aa).

ATP contacts are provided by residues arginine 108, lysine 148, 153-159 (GYDGKGQ), 183-186 (EKYL), glutamate 191, histidine 214, and 266-267 (NE). The 185-residue stretch at 112–296 (KETLKSAGTK…QFDTHILAVT (185 aa)) folds into the ATP-grasp domain.

It belongs to the PurK/PurT family. In terms of assembly, homodimer.

It catalyses the reaction 5-amino-1-(5-phospho-beta-D-ribosyl)imidazole + hydrogencarbonate + ATP = 5-carboxyamino-1-(5-phospho-D-ribosyl)imidazole + ADP + phosphate + 2 H(+). It participates in purine metabolism; IMP biosynthesis via de novo pathway; 5-amino-1-(5-phospho-D-ribosyl)imidazole-4-carboxylate from 5-amino-1-(5-phospho-D-ribosyl)imidazole (N5-CAIR route): step 1/2. Catalyzes the ATP-dependent conversion of 5-aminoimidazole ribonucleotide (AIR) and HCO(3)(-) to N5-carboxyaminoimidazole ribonucleotide (N5-CAIR). The protein is N5-carboxyaminoimidazole ribonucleotide synthase of Staphylococcus aureus (strain Mu50 / ATCC 700699).